Reading from the N-terminus, the 92-residue chain is Small ribosomal subunit protein bS20 (92 aa).

The segment at 1–23 is disordered; the sequence is MANSPSAKKRAIQAEKRRSHNAS.

The protein belongs to the bacterial ribosomal protein bS20 family.

Functionally, binds directly to 16S ribosomal RNA. The polypeptide is Small ribosomal subunit protein bS20 (Stutzerimonas stutzeri (strain A1501) (Pseudomonas stutzeri)).